The primary structure comprises 524 residues: Origin of replication complex subunit 5 (524 aa).

The span at Met-1 to Pro-19 shows a compositional bias: low complexity. The tract at residues Met-1–Ser-56 is disordered. Residues Ser-20–Lys-31 are compositionally biased toward pro residues. The segment covering Arg-39–Pro-49 has biased composition (low complexity). Gly-90–Thr-97 contacts ATP.

The protein belongs to the ORC5 family. As to quaternary structure, component of the origin recognition complex (ORC) composed of at least ORC1, ORC2, ORC3, ORC4, ORC5 and ORC6. ORC is regulated in a cell-cycle and development dependent manner. It is sequentially assembled at the exit from anaphase of mitosis and disassembled as cells enter S phase.

It is found in the nucleus. Component of the origin recognition complex (ORC) that binds origins of replication. DNA-binding is ATP-dependent. The specific DNA sequences that define origins of replication have not been identified yet. ORC is required to assemble the pre-replication complex necessary to initiate DNA replication. This Oryza sativa subsp. indica (Rice) protein is Origin of replication complex subunit 5.